The chain runs to 1253 residues: Guanine nucleotide exchange factor SDC25 (1253 aa).

The region spanning 26-98 is the SH3 domain; sequence QPIDVVECTY…PPSFTRSILN (73 aa). The segment at 624–649 is disordered; that stretch reads LNLDNAKDKKNGSQNTDIQEEEDEYE. One can recognise an N-terminal Ras-GEF domain in the interval 782–914; it reads GPIVRIKGGS…ELLKEVNQKF (133 aa). Residues 952 to 1199 form the Ras-GEF domain; the sequence is VDPVLFATQL…QYQLSLIIEP (248 aa). The interval 1202–1253 is disordered; sequence RKKVVPNSNSNNKSQEKSRDDQTDEGKTSTKKDRFPKFQLHKTKKKAPKVSK. Basic and acidic residues predominate over residues 1215-1237; it reads SQEKSRDDQTDEGKTSTKKDRFP. Positions 1240–1253 are enriched in basic residues; that stretch reads QLHKTKKKAPKVSK.

Promotes the exchange of Ras-bound GDP by GTP. The chain is Guanine nucleotide exchange factor SDC25 (SDC25) from Saccharomyces cerevisiae (Baker's yeast).